We begin with the raw amino-acid sequence, 346 residues long: Glycerol-1-phosphate dehydrogenase [NAD(P)+] (346 aa).

NAD(+) is bound by residues 93–97 and 115–118; these read GSIID and TTAS. Asp120 is a binding site for substrate. Position 124 (Ser124) interacts with NAD(+). Position 167 (Asp167) interacts with substrate. Residues Asp167 and His247 each contribute to the Zn(2+) site. Residue His251 coordinates substrate. His263 lines the Zn(2+) pocket.

It belongs to the glycerol-1-phosphate dehydrogenase family. Zn(2+) serves as cofactor.

The protein localises to the cytoplasm. The enzyme catalyses sn-glycerol 1-phosphate + NAD(+) = dihydroxyacetone phosphate + NADH + H(+). It catalyses the reaction sn-glycerol 1-phosphate + NADP(+) = dihydroxyacetone phosphate + NADPH + H(+). It participates in membrane lipid metabolism; glycerophospholipid metabolism. Functionally, catalyzes the NAD(P)H-dependent reduction of dihydroxyacetonephosphate (DHAP or glycerone phosphate) to glycerol 1-phosphate (G1P). The G1P thus generated is used as the glycerophosphate backbone of phospholipids in the cellular membranes of Archaea. The protein is Glycerol-1-phosphate dehydrogenase [NAD(P)+] of Pyrococcus horikoshii (strain ATCC 700860 / DSM 12428 / JCM 9974 / NBRC 100139 / OT-3).